A 416-amino-acid polypeptide reads, in one-letter code: Glutamyl-tRNA reductase (416 aa).

Residues 49–52 (TCNR), Ser-105, 110–112 (ETQ), and Gln-116 contribute to the substrate site. The Nucleophile role is filled by Cys-50. 185–190 (GAGEMI) lines the NADP(+) pocket.

This sequence belongs to the glutamyl-tRNA reductase family. Homodimer.

The catalysed reaction is (S)-4-amino-5-oxopentanoate + tRNA(Glu) + NADP(+) = L-glutamyl-tRNA(Glu) + NADPH + H(+). It functions in the pathway porphyrin-containing compound metabolism; protoporphyrin-IX biosynthesis; 5-aminolevulinate from L-glutamyl-tRNA(Glu): step 1/2. Functionally, catalyzes the NADPH-dependent reduction of glutamyl-tRNA(Glu) to glutamate 1-semialdehyde (GSA). The protein is Glutamyl-tRNA reductase of Thiobacillus denitrificans (strain ATCC 25259 / T1).